Reading from the N-terminus, the 988-residue chain is Band 4.1-like protein 2 (988 aa).

The tract at residues methionine 1 to valine 190 is disordered. Residue threonine 2 is modified to N-acetylthreonine. Serine 7 is subject to Phosphoserine. The span at alanine 22–glutamate 31 shows a compositional bias: basic and acidic residues. 3 positions are modified to phosphoserine: serine 38, serine 86, and serine 116. Composition is skewed to basic and acidic residues over residues isoleucine 110–proline 148 and glutamate 160–valine 190. Residues serine 201, serine 379, serine 395, serine 492, serine 543, serine 555, serine 561, and serine 582 each carry the phosphoserine modification. The region spanning valine 211–serine 492 is the FERM domain. The tract at residues glutamine 495–glutamate 651 is hydrophilic. Positions threonine 514–lysine 594 are disordered. The segment covering serine 555 to valine 567 has biased composition (low complexity). Tyrosine 606 is modified (phosphotyrosine). 2 positions are modified to phosphoserine: serine 610 and serine 630. Disordered regions lie at residues methionine 639–alanine 788 and glutamine 804–leucine 839. The interval lysine 652 to proline 837 is spectrin--actin-binding. Residues valine 673–serine 686 show a composition bias toward basic and acidic residues. The residue at position 698 (serine 698) is a Phosphoserine. Basic and acidic residues predominate over residues glycine 704–serine 717. A compositionally biased stretch (low complexity) spans threonine 718–serine 729. The span at glutamine 739–glutamate 751 shows a compositional bias: basic and acidic residues. A Phosphothreonine modification is found at threonine 745. Acidic residues predominate over residues glutamate 752–proline 764. Basic and acidic residues predominate over residues aspartate 828–leucine 839. Residues histidine 838 to glutamate 988 form a C-terminal (CTD) region.

Interacts with FCGR1A. Interacts with TRPC4. Interacts (via CTD domain) with FKBP2. Interacts with NUMA1; this interaction is negatively regulated by CDK1 during metaphase and promotes anaphase-specific localization of NUMA1 in symmetrically dividing cells. As to expression, widely expressed.

The protein resides in the cytoplasm. It localises to the cytoskeleton. It is found in the cell cortex. Its subcellular location is the cell membrane. Functionally, required for dynein-dynactin complex and NUMA1 recruitment at the mitotic cell cortex during anaphase. The chain is Band 4.1-like protein 2 from Mus musculus (Mouse).